A 260-amino-acid chain; its full sequence is uncharacterized protein (260 aa).

Belongs to the methyltransferase superfamily.

It localises to the cytoplasm. The protein localises to the nucleus. Its function is as follows. Probable methyltransferase. This is an uncharacterized protein from Schizosaccharomyces pombe (strain 972 / ATCC 24843) (Fission yeast).